A 512-amino-acid chain; its full sequence is METVLVAGFLCVYDDNDINDNFYLPRRTIQEEINSGNGLNIPLNINHNENAVIGTVSSLSVYSTVCFVARVQSKEFLTIIKKIAAKSKLITNTEEKTLPPDPEIECLNSIFPGLSLSNRVGGNERDPFFKHVSICGVGRRPGTIAIFGRNLNWILDRFSSITEAEKEKILSTDQSCVQFFAEEQFKVDLYDLLADSLDTSYIKVRFPKLQSDKQLSGISKSTYIKASENLTANNHTINVNSKVTKETEATDSVSQDDCAVHAPDLISTICSTTHTTHHDLVRMNGSATGNSASLPAPQFSECVFLPKDTFCSLLNATAGAQNKNVTPAAPIFKTDEYITPYPESLSRVDYGNRMNYHIPPPYWYPSMPGFNYKSYRGSQKRCAPTDSDDEMSFPGDPDYTTKKKKRYREDDDRELTKDKNDIKELVDAIGMLRHEISALKYIRSQSPQRQHCTAVDTMPTIEEKNVASPKPSVVNASLTPGQDRNQNLMQSDQSLLSLNKKLFVEALNKMDN.

Catalysis depends on charge relay system residues His47, Ser115, and His131. The interaction with pAP stretch occupies residues 264-282; sequence DLISTICSTTHTTHHDLVR. Residues 376–407 are disordered; it reads RGSQKRCAPTDSDDEMSFPGDPDYTTKKKKRY. The short motif at 402-408 is the Nuclear localization signal element; that stretch reads KKKKRYR. Positions 492 to 512 are interaction with major capsid protein; sequence DQSLLSLNKKLFVEALNKMDN.

The protein belongs to the herpesviridae capsid scaffolding protein family. As to quaternary structure, homomultimer. Interacts with major capsid protein. Exists in a monomer-dimer equilibrium with the dimer being the active species. In terms of processing, capsid scaffolding protein is cleaved by assemblin after formation of the spherical procapsid. As a result, the capsid obtains its mature, icosahedral shape. Cleavages occur at two or more sites: release (R-site) and maturation (M-site).

It localises to the host cytoplasm. The protein localises to the host nucleus. It carries out the reaction Cleaves -Ala-|-Ser- and -Ala-|-Ala- bonds in the scaffold protein.. Functionally, acts as a scaffold protein by binding major capsid protein in the cytoplasm, inducing the nuclear localization of both proteins. Multimerizes in the nucleus such as major capsid protein forms the icosahedral T=16 capsid. Autocatalytic cleavage releases the assembly protein, and subsequently abolishes interaction with major capsid protein. Cleavages products are evicted from the capsid before or during DNA packaging. In terms of biological role, protease that plays an essential role in virion assembly within the nucleus. Catalyzes the cleavage of the assembly protein after formation of the spherical procapsid. By that cleavage, the capsid matures and gains its icosahedral shape. The cleavage sites seem to include -Ala-Ser-, -Ala-Ala-, as well as Ala-Thr bonds. Assemblin and cleavages products are evicted from the capsid before or during DNA packaging. Its function is as follows. Plays a major role in capsid assembly. Acts as a scaffold protein by binding major capsid protein. Multimerizes in the nucleus such as major capsid protein forms the icosahedral T=16 capsid. Cleaved by assemblin after capsid completion. The cleavages products are evicted from the capsid before or during DNA packaging. The chain is Capsid scaffolding protein (U53) from Human herpesvirus 7 (strain JI) (HHV-7).